A 371-amino-acid chain; its full sequence is Probable acetylxylan esterase A (371 aa).

The N-terminal stretch at M1–A19 is a signal peptide. The segment at G32–F304 is catalytic. The active-site Charge relay system is the S149. N191 carries an N-linked (GlcNAc...) asparagine glycan. A disordered region spans residues T305–G335. Residues T305 to V336 form a ser/Thr-rich linker region. The span at G307–G335 shows a compositional bias: low complexity. Residues G335–L371 enclose the CBM1 domain.

Belongs to the carbohydrate esterase 1 (CE1) family. AxeA subfamily. In terms of assembly, monomer.

It is found in the secreted. The catalysed reaction is Deacetylation of xylans and xylo-oligosaccharides.. It functions in the pathway glycan degradation; xylan degradation. Functionally, acetylxylan esterase involved in the hydrolysis of xylan, a major structural heterogeneous polysaccharide found in plant biomass representing the second most abundant polysaccharide in the biosphere, after cellulose. Degrades acetylated xylans by cleaving acetyl side groups from the hetero-xylan backbone. The protein is Probable acetylxylan esterase A (axeA) of Aspergillus fumigatus (strain ATCC MYA-4609 / CBS 101355 / FGSC A1100 / Af293) (Neosartorya fumigata).